A 365-amino-acid polypeptide reads, in one-letter code: U1 snRNP-associated protein usp109 (365 aa).

3 consecutive RRM domains span residues 3 to 79, 86 to 162, and 189 to 259; these read TSLW…VVPE, YMLF…SVKS, and TAVY…WARP.

As to quaternary structure, component of the U1 snRNP complex.

Its subcellular location is the nucleus. This chain is U1 snRNP-associated protein usp109 (usp109), found in Schizosaccharomyces pombe (strain 972 / ATCC 24843) (Fission yeast).